Consider the following 578-residue polypeptide: Proline--tRNA ligase (578 aa).

Belongs to the class-II aminoacyl-tRNA synthetase family. ProS type 1 subfamily. Homodimer.

It is found in the cytoplasm. It carries out the reaction tRNA(Pro) + L-proline + ATP = L-prolyl-tRNA(Pro) + AMP + diphosphate. Catalyzes the attachment of proline to tRNA(Pro) in a two-step reaction: proline is first activated by ATP to form Pro-AMP and then transferred to the acceptor end of tRNA(Pro). As ProRS can inadvertently accommodate and process non-cognate amino acids such as alanine and cysteine, to avoid such errors it has two additional distinct editing activities against alanine. One activity is designated as 'pretransfer' editing and involves the tRNA(Pro)-independent hydrolysis of activated Ala-AMP. The other activity is designated 'posttransfer' editing and involves deacylation of mischarged Ala-tRNA(Pro). The misacylated Cys-tRNA(Pro) is not edited by ProRS. This is Proline--tRNA ligase from Burkholderia cenocepacia (strain ATCC BAA-245 / DSM 16553 / LMG 16656 / NCTC 13227 / J2315 / CF5610) (Burkholderia cepacia (strain J2315)).